The sequence spans 231 residues: Large ribosomal subunit protein uL1 (231 aa).

It belongs to the universal ribosomal protein uL1 family. Part of the 50S ribosomal subunit.

Its function is as follows. Binds directly to 23S rRNA. The L1 stalk is quite mobile in the ribosome, and is involved in E site tRNA release. Protein L1 is also a translational repressor protein, it controls the translation of the L11 operon by binding to its mRNA. This is Large ribosomal subunit protein uL1 from Neisseria meningitidis serogroup C (strain 053442).